The primary structure comprises 626 residues: UvrABC system protein C (626 aa).

The region spanning 26–105 is the GIY-YIG domain; it reads QEPGVYFMGD…IKQHQPHFNV (80 aa). The region spanning 215 to 250 is the UVR domain; sequence QELHQLLTQQMEKAAADLKFEQAALIRDQINSLGKL.

Belongs to the UvrC family. Interacts with UvrB in an incision complex.

The protein resides in the cytoplasm. In terms of biological role, the UvrABC repair system catalyzes the recognition and processing of DNA lesions. UvrC both incises the 5' and 3' sides of the lesion. The N-terminal half is responsible for the 3' incision and the C-terminal half is responsible for the 5' incision. This chain is UvrABC system protein C, found in Synechocystis sp. (strain ATCC 27184 / PCC 6803 / Kazusa).